Consider the following 99-residue polypeptide: Large ribosomal subunit protein uL23 (99 aa).

It belongs to the universal ribosomal protein uL23 family. In terms of assembly, part of the 50S ribosomal subunit. Contacts protein L29, and trigger factor when it is bound to the ribosome.

Functionally, one of the early assembly proteins it binds 23S rRNA. One of the proteins that surrounds the polypeptide exit tunnel on the outside of the ribosome. Forms the main docking site for trigger factor binding to the ribosome. This chain is Large ribosomal subunit protein uL23, found in Lachnospira eligens (strain ATCC 27750 / DSM 3376 / VPI C15-48 / C15-B4) (Eubacterium eligens).